The chain runs to 165 residues: MSRIYEQIEKDVEKIIGQYDGDKNGEVTINEAIEFFKRMGSKYPEKCAIVLFKMYDLDNEGKISYDEIQEEIFKRYQDKVREDQIKQYFQDDIEAFLLRYDKNRDNRIDFKELEQCFESIGSDHPKENANHIFTEIDKNRDGYLTIAEIKNYCRNTIRSKPYYQS.

EF-hand domains lie at 7–42 (QIEKDVEKIIGQYDGDKNGEVTINEAIEFFKRMGSK), 43–78 (YPEKCAIVLFKMYDLDNEGKISYDEIQEEIFKRYQD), 88–123 (YFQDDIEAFLLRYDKNRDNRIDFKELEQCFESIGSD), and 124–159 (HPKENANHIFTEIDKNRDGYLTIAEIKNYCRNTIRS). Asp-20, Asp-22, Asn-24, Glu-26, Glu-31, Asp-56, Asp-58, Glu-60, Lys-62, Glu-67, Asp-101, Asn-103, Asp-105, Arg-107, Glu-112, Asp-137, Asn-139, Asp-141, Tyr-143, and Glu-148 together coordinate Ca(2+).

The chain is Calcium-binding protein H (cbpH) from Dictyostelium discoideum (Social amoeba).